Reading from the N-terminus, the 564-residue chain is Threonine--tRNA ligase (564 aa).

The catalytic stretch occupies residues 167-464 (DHRSLGKQLE…LLEKTSGNFP (298 aa)). Residues Cys-260, His-311, and His-441 each coordinate Zn(2+).

Belongs to the class-II aminoacyl-tRNA synthetase family. In terms of assembly, homodimer. Zn(2+) is required as a cofactor.

It localises to the cytoplasm. The enzyme catalyses tRNA(Thr) + L-threonine + ATP = L-threonyl-tRNA(Thr) + AMP + diphosphate + H(+). Its function is as follows. Catalyzes the attachment of threonine to tRNA(Thr) in a two-step reaction: L-threonine is first activated by ATP to form Thr-AMP and then transferred to the acceptor end of tRNA(Thr). Also edits incorrectly charged L-seryl-tRNA(Thr). The polypeptide is Threonine--tRNA ligase (Mycoplasma genitalium (strain ATCC 33530 / DSM 19775 / NCTC 10195 / G37) (Mycoplasmoides genitalium)).